A 188-amino-acid chain; its full sequence is UPF0232 protein RHA1_ro03670 (188 aa).

Disordered regions lie at residues 1-20 (MTDD…PEVK), 31-78 (EARA…QPFG), and 166-188 (PTAP…DTYG). Residues 7 to 16 (PTAPAAAAPE) are compositionally biased toward low complexity.

The protein belongs to the UPF0232 family.

This Rhodococcus jostii (strain RHA1) protein is UPF0232 protein RHA1_ro03670.